Reading from the N-terminus, the 777-residue chain is DNA repair helicase/translocase XPB-R (777 aa).

Positions Ala212–Leu416 constitute a Helicase ATP-binding domain. Leu225 to Thr232 lines the ATP pocket. A DEVH box motif is present at residues Asp369–His372. The Helicase C-terminal domain maps to Ile484 to Asn631.

Belongs to the helicase family. RAD25/XPB subfamily.

It carries out the reaction Couples ATP hydrolysis with the unwinding of duplex DNA by translocating in the 3'-5' direction.. The catalysed reaction is ATP + H2O = ADP + phosphate + H(+). Its function is as follows. ATP-dependent 3'-5' DNA helicase/translocase; binds dsDNA rather than ssDNA, unzipping it in a translocase rather than classical helicase activity. Involved in nucleotide excision repair (NER) of damaged DNA. XPB-R is a paralog of XBP, but is not a component of the TFIIH basal transcription factor and is dispensable for RNA polymerase II transcription. The chain is DNA repair helicase/translocase XPB-R from Trypanosoma brucei brucei (strain 927/4 GUTat10.1).